We begin with the raw amino-acid sequence, 513 residues long: MGPTKYIIIAVVIIIICVILGLYVVDKKAKEKLSEASKEARRLKEEAERDAEAKKKEAILEAKEEAHKLRAEVERENRERRNEVQRLERRIIQKEEALDKKSEALENKEEALNKKQQKIEDVETHMEELHEKQRTELERISGLTTEQAKEFLLEQVRKEVKHETAVMIKEIETKAKEEADKRAREVITYAIQRCAADHVAETTVHVVNLPNDEMKGRIIGREGRNIRTLETLTGVDLIIDDTPEAVILSGFDPIRREVARIALEKLIVDGRIHPARIEEMVEKAKKEVEISIKEEGEQATFETGIHGLHIELIRLLGRLKYRTSYGQNVLKHSIEVSHLAGLMASELGIDPTLAKRVGLLHDIGKAVDHEVEGPHAIIGSEIAKKYRESALVVNAIGAHHGDMEPQSLEAILVQAADAISAARPGARRETLEAYIKRLEKLEEIANECEGVEKSYAIQAGREIRIMVKPEVLDDTGCIEMARNIVKQIESELEYPGQIKVNVIRETRAIEYAK.

A helical transmembrane segment spans residues 6–26; the sequence is YIIIAVVIIIICVILGLYVVD. Positions 203–288 constitute a KH domain; sequence TVHVVNLPND…EMVEKAKKEV (86 aa). In terms of domain architecture, HD spans 329–422; sequence VLKHSIEVSH…VQAADAISAA (94 aa).

This sequence belongs to the RNase Y family.

It is found in the cell membrane. Endoribonuclease that initiates mRNA decay. The sequence is that of Ribonuclease Y from Clostridium botulinum (strain Loch Maree / Type A3).